The chain runs to 342 residues: Trans-3-hydroxy-L-proline dehydratase (342 aa).

Ser90 functions as the Proton acceptor in the catalytic mechanism. Residues 91–92 (GS), Asp252, and 257–258 (GT) contribute to the substrate site.

This sequence belongs to the proline racemase family.

The catalysed reaction is trans-3-hydroxy-L-proline = 1-pyrroline-2-carboxylate + H2O. Functionally, catalyzes the dehydration of trans-3-hydroxy-L-proline (t3LHyp) to Delta(1)-pyrroline-2-carboxylate (Pyr2C). Can also catalyze the epimerization of trans-4-hydroxy-L-proline (t4LHyp) to cis-4-hydroxy-D-proline (c4DHyp), albeit with 150-fold lower efficiency. May be involved in the degradation pathway that converts t3LHyp to L-proline, which would allow R.meliloti to grow on t3LHyp as a sole carbon source. Displays no proline racemase activity. This is Trans-3-hydroxy-L-proline dehydratase from Rhizobium meliloti (strain 1021) (Ensifer meliloti).